The primary structure comprises 408 residues: Potassium channel subfamily K member 13 (408 aa).

At 1 to 19 (MAGRGFSWGPGHLNEDNAR) the chain is on the cytoplasmic side. The helical transmembrane segment at 20–40 (FLLLAALIVLYLLGGAAVFSA) threads the bilayer. N-linked (GlcNAc...) asparagine glycans are attached at residues Asn59 and Asn65. The segment at residues 95–115 (WDFTGAFYFVGTVVSTIGFGM) is an intramembrane region (pore-forming). Thr110, Ile111, and Gly112 together coordinate K(+). Positions 110–115 (TIGFGM) are selectivity filter 1. Residues 125–145 (IFLIFYGLVGCSSTILFFNLF) form a helical membrane-spanning segment. The Cytoplasmic segment spans residues 146-193 (LERLITIIAYIMKSCHQRQLRRRGALPQESLKDAGQCEVDSLAGWKPS). Residues 194–214 (VYYVMLILCTASILISCCASA) traverse the membrane as a helical segment. An intramembrane region (pore-forming) is located at residues 224–244 (YFDSLYFCFVAFSTIGFGDLV). Residues Thr237, Ile238, Gly239, and Phe240 each contribute to the K(+) site. A selectivity filter 2 region spans residues 237–242 (TIGFGD). A helical membrane pass occupies residues 263–283 (VFILMGVCCIYSLFNVISILI). The Cytoplasmic portion of the chain corresponds to 284–408 (KQSLNWILRK…NRLAETSGDR (125 aa)).

This sequence belongs to the two pore domain potassium channel (TC 1.A.1.8) family. As to quaternary structure, homodimer. Heterodimer with KCNK12. In terms of tissue distribution, expressed in microglia (at protein level).

It is found in the cell membrane. It carries out the reaction K(+)(in) = K(+)(out). The channel conductance is activated by arachidonic acid and inhibited by Ba(2+) ions, volatile anesthetics such as halothane and antiarrhythmic drugs mexiletine and lidocaine. Insensitive to extracellular pH change. Functionally, k(+) channel that conducts outward rectifying tonic currents potentiated by purinergic signals. Homo- and heterodimerizes to form functional channels with distinct regulatory and gating properties. Contributes most of K(+) currents at the plasma membrane of resting microglia. Maintains a depolarized membrane potential required for proper ramified microglia morphology and phagocytosis, selectively mediating microglial pruning of presynaptic compartments at hippocampal excitatory synapses. Upon local release of ATP caused by neuronal injury or infection, it is potentiated by P2RY12 and P2RX7 receptor signaling and contributes to ATP-triggered K(+) efflux underlying microglial NLRP3 inflammasome assembly and IL1B release. This is Potassium channel subfamily K member 13 from Homo sapiens (Human).